We begin with the raw amino-acid sequence, 72 residues long: UPF0270 protein YheU (72 aa).

The protein belongs to the UPF0270 family.

This Shigella flexneri serotype 5b (strain 8401) protein is UPF0270 protein YheU.